A 331-amino-acid chain; its full sequence is Beta-ketoacyl-[acyl-carrier-protein] synthase III (331 aa).

Active-site residues include C115 and H255. Residues 256–260 (QANFR) are ACP-binding. Residue N285 is part of the active site.

The protein belongs to the thiolase-like superfamily. FabH family. Homodimer.

The protein localises to the cytoplasm. The enzyme catalyses malonyl-[ACP] + acetyl-CoA + H(+) = 3-oxobutanoyl-[ACP] + CO2 + CoA. It participates in lipid metabolism; fatty acid biosynthesis. Catalyzes the condensation reaction of fatty acid synthesis by the addition to an acyl acceptor of two carbons from malonyl-ACP. Catalyzes the first condensation reaction which initiates fatty acid synthesis and may therefore play a role in governing the total rate of fatty acid production. Possesses both acetoacetyl-ACP synthase and acetyl transacylase activities. Its substrate specificity determines the biosynthesis of branched-chain and/or straight-chain of fatty acids. This is Beta-ketoacyl-[acyl-carrier-protein] synthase III from Helicobacter pylori (strain Shi470).